The following is a 187-amino-acid chain: Elongation factor P (187 aa).

The protein belongs to the elongation factor P family.

The protein localises to the cytoplasm. The protein operates within protein biosynthesis; polypeptide chain elongation. Functionally, involved in peptide bond synthesis. Stimulates efficient translation and peptide-bond synthesis on native or reconstituted 70S ribosomes in vitro. Probably functions indirectly by altering the affinity of the ribosome for aminoacyl-tRNA, thus increasing their reactivity as acceptors for peptidyl transferase. This is Elongation factor P from Fusobacterium nucleatum subsp. nucleatum (strain ATCC 25586 / DSM 15643 / BCRC 10681 / CIP 101130 / JCM 8532 / KCTC 2640 / LMG 13131 / VPI 4355).